The following is a 267-amino-acid chain: Lectin SfL-1 (267 aa).

4 tandem repeats follow at residues glycine 1 to aspartate 67, serine 68 to glycine 135, aspartate 136 to glycine 202, and serine 203 to isoleucine 267. The segment at glycine 1–isoleucine 267 is 4 X approximate tandem repeats.

As to quaternary structure, monomer.

In terms of biological role, lectin specific for high mannose N-glycans, recognizes the branched moiety of these glycans. Does not recognize other types of N-glycans or monosaccharides. The protein is Lectin SfL-1 of Solieria filiformis (Red alga).